The following is a 370-amino-acid chain: D-alanine--D-alanine ligase (370 aa).

Positions 144–352 (KKIFADAGIP…YGALIERLVD (209 aa)) constitute an ATP-grasp domain. 177 to 232 (EEVLTYPVFVKPANLGSSVGISKATNKKELADAMTEAFLYDRRVVVEQGVVAREIE) provides a ligand contact to ATP. 3 residues coordinate Mg(2+): Asp306, Glu319, and Asn321.

It belongs to the D-alanine--D-alanine ligase family. The cofactor is Mg(2+). Mn(2+) is required as a cofactor.

It is found in the cytoplasm. It catalyses the reaction 2 D-alanine + ATP = D-alanyl-D-alanine + ADP + phosphate + H(+). It functions in the pathway cell wall biogenesis; peptidoglycan biosynthesis. Functionally, cell wall formation. This is D-alanine--D-alanine ligase from Listeria monocytogenes serotype 4b (strain F2365).